Consider the following 768-residue polypeptide: DNA ligase (768 aa).

Over residues 1-11 the composition is skewed to low complexity; sequence MSPSAPANSAP. The segment at 1–28 is disordered; it reads MSPSAPANSAPDPDRNGVPDVGPASAAP. Residues 62–66, 111–112, and Glu-148 each bind NAD(+); these read DAEYD and SI. Residue Lys-150 is the N6-AMP-lysine intermediate of the active site. Arg-171, Glu-238, Lys-361, and Lys-385 together coordinate NAD(+). Zn(2+)-binding residues include Cys-484, Cys-487, Cys-502, and Cys-508. Residues 670–759 enclose the BRCT domain; sequence AAELPLAGKT…EADADADAEG (90 aa).

Belongs to the NAD-dependent DNA ligase family. LigA subfamily. Mg(2+) is required as a cofactor. Mn(2+) serves as cofactor.

The catalysed reaction is NAD(+) + (deoxyribonucleotide)n-3'-hydroxyl + 5'-phospho-(deoxyribonucleotide)m = (deoxyribonucleotide)n+m + AMP + beta-nicotinamide D-nucleotide.. Its function is as follows. DNA ligase that catalyzes the formation of phosphodiester linkages between 5'-phosphoryl and 3'-hydroxyl groups in double-stranded DNA using NAD as a coenzyme and as the energy source for the reaction. It is essential for DNA replication and repair of damaged DNA. This chain is DNA ligase, found in Leptothrix cholodnii (strain ATCC 51168 / LMG 8142 / SP-6) (Leptothrix discophora (strain SP-6)).